The chain runs to 119 residues: Large ribosomal subunit protein bL20 (119 aa).

The protein belongs to the bacterial ribosomal protein bL20 family.

Its function is as follows. Binds directly to 23S ribosomal RNA and is necessary for the in vitro assembly process of the 50S ribosomal subunit. It is not involved in the protein synthesizing functions of that subunit. In Heliobacterium modesticaldum (strain ATCC 51547 / Ice1), this protein is Large ribosomal subunit protein bL20.